We begin with the raw amino-acid sequence, 345 residues long: Probable translocation protein y4yO (345 aa).

The span at 1-22 shows a compositional bias: basic and acidic residues; it reads MSDTSEEKSHGATPKKLSDARK. The interval 1 to 25 is disordered; that stretch reads MSDTSEEKSHGATPKKLSDARKRGQ. 3 helical membrane-spanning segments follow: residues 87–107, 151–171, and 189–209; these read LATVGPLLSALFGAVILAALL, VLVLGGTFSLFFLGLWKTMVY, and QLIGIGAGALLIGGLIDLLLQ.

It belongs to the type III secretion exporter family.

The protein localises to the cell membrane. Could be involved in the secretion of an unknown factor. The sequence is that of Probable translocation protein y4yO from Sinorhizobium fredii (strain NBRC 101917 / NGR234).